The primary structure comprises 575 residues: Dihydroxy-acid dehydratase (575 aa).

The tract at residues 1-25 (MPTTDSARAADIKQPDIKPRSRDVT) is disordered. The span at 8 to 25 (RAADIKQPDIKPRSRDVT) shows a compositional bias: basic and acidic residues. Cysteine 64 provides a ligand contact to [2Fe-2S] cluster. Aspartate 96 lines the Mg(2+) pocket. Cysteine 137 is a [2Fe-2S] cluster binding site. Residues aspartate 138 and lysine 139 each coordinate Mg(2+). Lysine 139 bears the N6-carboxylysine mark. [2Fe-2S] cluster is bound at residue cysteine 214. Residue glutamate 465 coordinates Mg(2+). Serine 491 serves as the catalytic Proton acceptor.

Belongs to the IlvD/Edd family. As to quaternary structure, homodimer. The cofactor is [2Fe-2S] cluster. Mg(2+) is required as a cofactor.

It carries out the reaction (2R)-2,3-dihydroxy-3-methylbutanoate = 3-methyl-2-oxobutanoate + H2O. The enzyme catalyses (2R,3R)-2,3-dihydroxy-3-methylpentanoate = (S)-3-methyl-2-oxopentanoate + H2O. It participates in amino-acid biosynthesis; L-isoleucine biosynthesis; L-isoleucine from 2-oxobutanoate: step 3/4. The protein operates within amino-acid biosynthesis; L-valine biosynthesis; L-valine from pyruvate: step 3/4. Functions in the biosynthesis of branched-chain amino acids. Catalyzes the dehydration of (2R,3R)-2,3-dihydroxy-3-methylpentanoate (2,3-dihydroxy-3-methylvalerate) into 2-oxo-3-methylpentanoate (2-oxo-3-methylvalerate) and of (2R)-2,3-dihydroxy-3-methylbutanoate (2,3-dihydroxyisovalerate) into 2-oxo-3-methylbutanoate (2-oxoisovalerate), the penultimate precursor to L-isoleucine and L-valine, respectively. This is Dihydroxy-acid dehydratase from Mycolicibacterium paratuberculosis (strain ATCC BAA-968 / K-10) (Mycobacterium paratuberculosis).